A 154-amino-acid polypeptide reads, in one-letter code: Large ribosomal subunit protein uL22c (154 aa).

Belongs to the universal ribosomal protein uL22 family. In terms of assembly, part of the 50S ribosomal subunit.

It is found in the plastid. Its subcellular location is the chloroplast. Its function is as follows. This protein binds specifically to 23S rRNA. In terms of biological role, the globular domain of the protein is located near the polypeptide exit tunnel on the outside of the subunit, while an extended beta-hairpin is found that lines the wall of the exit tunnel in the center of the 70S ribosome. In Guizotia abyssinica (Niger), this protein is Large ribosomal subunit protein uL22c (rpl22).